Here is a 366-residue protein sequence, read N- to C-terminus: Probable methyltransferase-like protein 24 (366 aa).

A signal peptide spans 1–29 (MARERPPGRGCGVLRRCLLGAVLLFGLRL). Positions 36–110 (AGPGSPTRSA…GRPRRKGPRW (75 aa)) are disordered. Residues 44–63 (SAPPGPAWRPPGPHLPPAPG) show a composition bias toward pro residues. Low complexity predominate over residues 91-100 (TPEPGCCAPR).

Belongs to the methyltransferase superfamily.

The protein localises to the secreted. Its function is as follows. Probable methyltransferase. The chain is Probable methyltransferase-like protein 24 (METTL24) from Homo sapiens (Human).